We begin with the raw amino-acid sequence, 1657 residues long: Ras GTPase-activating-like protein IQGAP1 (1657 aa).

Ser2 bears the N-acetylserine mark. Ser2 carries the phosphoserine modification. One can recognise a Calponin-homology (CH) domain in the interval 44 to 159; sequence LCHLEEAKRW…YCIHALSLYL (116 aa). At Tyr172 the chain carries Phosphotyrosine. Ser330 carries the post-translational modification Phosphoserine. The WW domain maps to 685-710; sequence WVKHWVKGGYHYYHNLETQAGGWAEP. IQ domains follow at residues 745-774, 775-804, 805-834, and 835-864; these read NEGL…FLKK, QIPA…YLHS, HKDE…YFRD, and HIND…AEDP. The C1 stretch occupies residues 956–1274; that stretch reads GGLKALSKEK…FFQVACDVPE (319 aa). The region spanning 1020-1269 is the Ras-GAP domain; it reads YLLLRLFQTA…QKFRRFFQVA (250 aa). Residues 1276-1657 are C2; the sequence is QDKFNVDEYS…FLLNKKFYGK (382 aa). Ser1441 bears the Phosphoserine mark.

In terms of assembly, interacts with CDC42; the interaction is demonstrated with IQGAP1 in GTP-bound and in nucleotide-free state. Interacts with RAC1. Does not interact with RHOA. Interacts with TSG101. Interacts with PAK6. Interacts with SASH1. Interacts with PJVK. Interacts with SLC26A4. This interaction enhances the chloride-bicarbonate exchange activity of SLC26A4. Interacts with SVEP1. Interacts with ILK; the interaction is required for localization of IQGAP to the cell cortex. (Microbial infection) In case of infection, interacts with S.typhimurium protein sseI. In terms of tissue distribution, expressed in the kidney (at protein level).

The protein localises to the cell membrane. It is found in the nucleus. Its subcellular location is the cytoplasm. It localises to the cell cortex. The protein resides in the apical cell membrane. The protein localises to the basolateral cell membrane. In terms of biological role, plays a crucial role in regulating the dynamics and assembly of the actin cytoskeleton. Recruited to the cell cortex by interaction with ILK which allows it to cooperate with its effector DIAPH1 to locally stabilize microtubules and allow stable insertion of caveolae into the plasma membrane. Binds to activated CDC42 but does not stimulate its GTPase activity. Associates with calmodulin. May promote neurite outgrowth. May play a possible role in cell cycle regulation by contributing to cell cycle progression after DNA replication arrest. This is Ras GTPase-activating-like protein IQGAP1 (Iqgap1) from Mus musculus (Mouse).